We begin with the raw amino-acid sequence, 692 residues long: Elongation factor G (692 aa).

The tr-type G domain maps to 8–283 (QDLRNIGIVA…AVVDYLPSPL (276 aa)). Residues 17–24 (AHIDAGKT), 81–85 (DTPGH), and 135–138 (NKLD) each bind GTP.

It belongs to the TRAFAC class translation factor GTPase superfamily. Classic translation factor GTPase family. EF-G/EF-2 subfamily.

The protein resides in the cytoplasm. Catalyzes the GTP-dependent ribosomal translocation step during translation elongation. During this step, the ribosome changes from the pre-translocational (PRE) to the post-translocational (POST) state as the newly formed A-site-bound peptidyl-tRNA and P-site-bound deacylated tRNA move to the P and E sites, respectively. Catalyzes the coordinated movement of the two tRNA molecules, the mRNA and conformational changes in the ribosome. This is Elongation factor G from Hydrogenobaculum sp. (strain Y04AAS1).